Consider the following 337-residue polypeptide: DNA repair and recombination protein RadA (337 aa).

115–122 (GEFGSGKT) is a binding site for ATP.

The protein belongs to the eukaryotic RecA-like protein family.

Functionally, involved in DNA repair and in homologous recombination. Binds and assemble on single-stranded DNA to form a nucleoprotein filament. Hydrolyzes ATP in a ssDNA-dependent manner and promotes DNA strand exchange between homologous DNA molecules. The chain is DNA repair and recombination protein RadA (radA) from Archaeoglobus fulgidus (strain ATCC 49558 / DSM 4304 / JCM 9628 / NBRC 100126 / VC-16).